The primary structure comprises 495 residues: Omega-crystallin (495 aa).

It belongs to the aldehyde dehydrogenase family. Lens.

Its function is as follows. Omega-crystallins are structural components of squids and octopi eye lens. Contains relatively little if any DHAL activity. The sequence is that of Omega-crystallin from Nototodarus sloanii (Wellington flying squid).